The primary structure comprises 689 residues: Bifunctional protein GAL10 (689 aa).

The tract at residues 1–345 (MSYILVTGGA…TTKNPFGFQI (345 aa)) is galactowaldenase. Residue 3–34 (YILVTGGAGYIGSHTVVELVNNGYNVVVVDNL) coordinates NAD(+). Residues 346-689 (NNYSWTKFDS…SYTIYRFENF (344 aa)) form a mutarotase region. Histidine 534 serves as the catalytic For mutarotase activity.

This sequence in the N-terminal section; belongs to the NAD(P)-dependent epimerase/dehydratase family. It in the C-terminal section; belongs to the aldose epimerase family. NAD(+) serves as cofactor.

It carries out the reaction UDP-alpha-D-glucose = UDP-alpha-D-galactose. The catalysed reaction is alpha-D-glucose = beta-D-glucose. It participates in carbohydrate metabolism; galactose metabolism. The protein operates within carbohydrate metabolism; hexose metabolism. Mutarotase converts alpha-aldose to the beta-anomer. It is active on D-glucose, L-arabinose, D-xylose, D-galactose, maltose and lactose. The chain is Bifunctional protein GAL10 (GAL10) from Pachysolen tannophilus (Yeast).